The sequence spans 306 residues: Agmatinase (306 aa).

Mn(2+) is bound by residues His-126, Asp-149, His-151, Asp-153, Asp-230, and Asp-232.

This sequence belongs to the arginase family. Agmatinase subfamily. The cofactor is Mn(2+).

The enzyme catalyses agmatine + H2O = urea + putrescine. Its pathway is amine and polyamine biosynthesis; putrescine biosynthesis via agmatine pathway; putrescine from agmatine: step 1/1. Its function is as follows. Catalyzes the formation of putrescine from agmatine. The polypeptide is Agmatinase (Escherichia coli (strain K12 / DH10B)).